Consider the following 103-residue polypeptide: Large ribosomal subunit protein uL24 (103 aa).

It belongs to the universal ribosomal protein uL24 family. As to quaternary structure, part of the 50S ribosomal subunit.

Functionally, one of two assembly initiator proteins, it binds directly to the 5'-end of the 23S rRNA, where it nucleates assembly of the 50S subunit. One of the proteins that surrounds the polypeptide exit tunnel on the outside of the subunit. This Mannheimia succiniciproducens (strain KCTC 0769BP / MBEL55E) protein is Large ribosomal subunit protein uL24.